A 304-amino-acid chain; its full sequence is tRNA dimethylallyltransferase (304 aa).

An ATP-binding site is contributed by 10–17 (GPTASGKT). Substrate is bound at residue 12 to 17 (TASGKT). Interaction with substrate tRNA regions lie at residues 35-38 (DSAL), 159-163 (QRLSR), and 240-245 (RCVGYR).

This sequence belongs to the IPP transferase family. Monomer. Requires Mg(2+) as cofactor.

It carries out the reaction adenosine(37) in tRNA + dimethylallyl diphosphate = N(6)-dimethylallyladenosine(37) in tRNA + diphosphate. Its function is as follows. Catalyzes the transfer of a dimethylallyl group onto the adenine at position 37 in tRNAs that read codons beginning with uridine, leading to the formation of N6-(dimethylallyl)adenosine (i(6)A). This Shewanella putrefaciens (strain CN-32 / ATCC BAA-453) protein is tRNA dimethylallyltransferase.